We begin with the raw amino-acid sequence, 486 residues long: ATP-dependent 6-phosphofructokinase (486 aa).

ATP is bound by residues G105, 171-172 (RG), and 196-199 (GDGT). D197 is a Mg(2+) binding site. Substrate is bound by residues 225 to 227 (TID), 270 to 272 (MGR), E323, and 378 to 381 (YMIR). D227 (proton acceptor) is an active-site residue. The short motif at 484–486 (SKV) is the Peroxisomal targeting signal element.

This sequence belongs to the phosphofructokinase type A (PFKA) family. PPi-dependent PFK group II subfamily. Atypical ATP-dependent clade 'X' sub-subfamily. As to quaternary structure, homotetramer. Requires Mg(2+) as cofactor.

It is found in the glycosome. It catalyses the reaction beta-D-fructose 6-phosphate + ATP = beta-D-fructose 1,6-bisphosphate + ADP + H(+). The protein operates within carbohydrate degradation; glycolysis; D-glyceraldehyde 3-phosphate and glycerone phosphate from D-glucose: step 3/4. With respect to regulation, allosterically activated by AMP. Functionally, catalyzes the phosphorylation of D-fructose 6-phosphate to fructose 1,6-bisphosphate by ATP, the first committing step of glycolysis. The protein is ATP-dependent 6-phosphofructokinase of Leishmania donovani.